Here is a 417-residue protein sequence, read N- to C-terminus: NADH-quinone oxidoreductase subunit D (417 aa).

Belongs to the complex I 49 kDa subunit family. As to quaternary structure, NDH-1 is composed of 14 different subunits. Subunits NuoB, C, D, E, F, and G constitute the peripheral sector of the complex.

Its subcellular location is the cell inner membrane. It carries out the reaction a quinone + NADH + 5 H(+)(in) = a quinol + NAD(+) + 4 H(+)(out). NDH-1 shuttles electrons from NADH, via FMN and iron-sulfur (Fe-S) centers, to quinones in the respiratory chain. The immediate electron acceptor for the enzyme in this species is believed to be ubiquinone. Couples the redox reaction to proton translocation (for every two electrons transferred, four hydrogen ions are translocated across the cytoplasmic membrane), and thus conserves the redox energy in a proton gradient. The chain is NADH-quinone oxidoreductase subunit D from Francisella tularensis subsp. novicida (strain U112).